The chain runs to 163 residues: NADH-quinone oxidoreductase subunit I 1 (163 aa).

4Fe-4S ferredoxin-type domains lie at 53 to 83 (LRRY…IEAG) and 94 to 123 (VRYD…EGPN). Residues C63, C66, C69, C73, C103, C106, C109, and C113 each contribute to the [4Fe-4S] cluster site.

This sequence belongs to the complex I 23 kDa subunit family. In terms of assembly, NDH-1 is composed of 14 different subunits. Subunits NuoA, H, J, K, L, M, N constitute the membrane sector of the complex. [4Fe-4S] cluster is required as a cofactor.

The protein resides in the cell inner membrane. It catalyses the reaction a quinone + NADH + 5 H(+)(in) = a quinol + NAD(+) + 4 H(+)(out). In terms of biological role, NDH-1 shuttles electrons from NADH, via FMN and iron-sulfur (Fe-S) centers, to quinones in the respiratory chain. The immediate electron acceptor for the enzyme in this species is believed to be ubiquinone. Couples the redox reaction to proton translocation (for every two electrons transferred, four hydrogen ions are translocated across the cytoplasmic membrane), and thus conserves the redox energy in a proton gradient. The polypeptide is NADH-quinone oxidoreductase subunit I 1 (Rhizobium etli (strain ATCC 51251 / DSM 11541 / JCM 21823 / NBRC 15573 / CFN 42)).